The sequence spans 256 residues: Chorismate mutase (256 aa).

The region spanning 3-255 (FTKPETVLNL…EVEYLLRRLE (253 aa)) is the Chorismate mutase domain. 2 residues coordinate L-tyrosine: Arg75 and Arg76. Positions 138, 139, 141, and 142 each coordinate L-tryptophan. L-tyrosine contacts are provided by Asn139, Gly141, Ser142, and Thr145.

As to quaternary structure, homodimer.

It is found in the cytoplasm. The enzyme catalyses chorismate = prephenate. The protein operates within metabolic intermediate biosynthesis; prephenate biosynthesis; prephenate from chorismate: step 1/1. With respect to regulation, each dimer has two allosteric binding sites that can bind the regulatory effectors tryptophan or tyrosine. Can bind either one tryptophan or one tyrosine, two tryptophan or two tyrosine or one tryptophan and one tyrosine, which differentially affect the catalytic activity. Activated by tryptophan and subject to feedback inhibition by tyrosine. In the presence of both tryptophan and tyrosine, the enzyme is in the activated state. Its function is as follows. Catalyzes the Claisen rearrangement of chorismate to prephenate. Acts at the first branch point in the aromatic amino acid pathway where it steers biosynthesis towards phenylalanine and tyrosine, and away from tryptophan. This is Chorismate mutase from Saccharomyces cerevisiae (strain ATCC 204508 / S288c) (Baker's yeast).